The sequence spans 1342 residues: DNA-directed RNA polymerase subunit beta (1342 aa).

This sequence belongs to the RNA polymerase beta chain family. The RNAP catalytic core consists of 2 alpha, 1 beta, 1 beta' and 1 omega subunit. When a sigma factor is associated with the core the holoenzyme is formed, which can initiate transcription.

It carries out the reaction RNA(n) + a ribonucleoside 5'-triphosphate = RNA(n+1) + diphosphate. DNA-dependent RNA polymerase catalyzes the transcription of DNA into RNA using the four ribonucleoside triphosphates as substrates. This Yersinia enterocolitica serotype O:8 / biotype 1B (strain NCTC 13174 / 8081) protein is DNA-directed RNA polymerase subunit beta.